We begin with the raw amino-acid sequence, 325 residues long: 4-hydroxy-3-methylbut-2-enyl diphosphate reductase (325 aa).

Cys-21 provides a ligand contact to [4Fe-4S] cluster. (2E)-4-hydroxy-3-methylbut-2-enyl diphosphate-binding residues include His-50 and His-83. Dimethylallyl diphosphate-binding residues include His-50 and His-83. His-50 and His-83 together coordinate isopentenyl diphosphate. Cys-105 contacts [4Fe-4S] cluster. (2E)-4-hydroxy-3-methylbut-2-enyl diphosphate is bound at residue His-133. His-133 provides a ligand contact to dimethylallyl diphosphate. Position 133 (His-133) interacts with isopentenyl diphosphate. Glu-135 acts as the Proton donor in catalysis. A (2E)-4-hydroxy-3-methylbut-2-enyl diphosphate-binding site is contributed by Thr-173. Cys-203 lines the [4Fe-4S] cluster pocket. Positions 231, 232, 233, and 275 each coordinate (2E)-4-hydroxy-3-methylbut-2-enyl diphosphate. Dimethylallyl diphosphate contacts are provided by Ser-231, Ser-232, Asn-233, and Ser-275. Isopentenyl diphosphate-binding residues include Ser-231, Ser-232, Asn-233, and Ser-275.

This sequence belongs to the IspH family. Requires [4Fe-4S] cluster as cofactor.

The enzyme catalyses isopentenyl diphosphate + 2 oxidized [2Fe-2S]-[ferredoxin] + H2O = (2E)-4-hydroxy-3-methylbut-2-enyl diphosphate + 2 reduced [2Fe-2S]-[ferredoxin] + 2 H(+). The catalysed reaction is dimethylallyl diphosphate + 2 oxidized [2Fe-2S]-[ferredoxin] + H2O = (2E)-4-hydroxy-3-methylbut-2-enyl diphosphate + 2 reduced [2Fe-2S]-[ferredoxin] + 2 H(+). The protein operates within isoprenoid biosynthesis; dimethylallyl diphosphate biosynthesis; dimethylallyl diphosphate from (2E)-4-hydroxy-3-methylbutenyl diphosphate: step 1/1. It participates in isoprenoid biosynthesis; isopentenyl diphosphate biosynthesis via DXP pathway; isopentenyl diphosphate from 1-deoxy-D-xylulose 5-phosphate: step 6/6. Its function is as follows. Catalyzes the conversion of 1-hydroxy-2-methyl-2-(E)-butenyl 4-diphosphate (HMBPP) into a mixture of isopentenyl diphosphate (IPP) and dimethylallyl diphosphate (DMAPP). Acts in the terminal step of the DOXP/MEP pathway for isoprenoid precursor biosynthesis. This is 4-hydroxy-3-methylbut-2-enyl diphosphate reductase from Bordetella pertussis (strain Tohama I / ATCC BAA-589 / NCTC 13251).